Here is a 567-residue protein sequence, read N- to C-terminus: Phenylalanine--tRNA ligase beta subunit (567 aa).

The 76-residue stretch at 284 to 359 folds into the B5 domain; it reads FAVRTKHVSH…RAYDFNDLTP (76 aa). Residues Asp337, Asp343, Asp346, and Asp347 each contribute to the Mg(2+) site.

The protein belongs to the phenylalanyl-tRNA synthetase beta subunit family. Type 2 subfamily. In terms of assembly, tetramer of two alpha and two beta subunits. The cofactor is Mg(2+).

The protein localises to the cytoplasm. It carries out the reaction tRNA(Phe) + L-phenylalanine + ATP = L-phenylalanyl-tRNA(Phe) + AMP + diphosphate + H(+). In Halobacterium salinarum (strain ATCC 29341 / DSM 671 / R1), this protein is Phenylalanine--tRNA ligase beta subunit.